Here is a 207-residue protein sequence, read N- to C-terminus: Ras-related protein Rab-7a (207 aa).

An N-acetylthreonine modification is found at Thr-2. GTP-binding residues include Ser-17, Gly-18, Val-19, Gly-20, Lys-21, Thr-22, Ser-23, Ser-34, Asn-35, Tyr-37, and Thr-40. A Mg(2+)-binding site is contributed by Thr-22. Positions 28–41 (YVNKKFSNQYKATI) match the Switch 1 motif. The Mg(2+) site is built by Thr-40 and Asp-63. Residue Gly-66 coordinates GTP. A Switch 2 motif is present at residues 67–82 (QERFQSLGVAFYRGAD). Phosphoserine is present on Ser-72. Residues Asn-125, Lys-126, Asp-128, Ala-156, and Lys-157 each contribute to the GTP site. Glycyl lysine isopeptide (Lys-Gly) (interchain with G-Cter in ubiquitin) cross-links involve residues Lys-191 and Lys-194. 2 S-geranylgeranyl cysteine lipidation sites follow: Cys-205 and Cys-207. Cysteine methyl ester is present on Cys-207.

The protein belongs to the small GTPase superfamily. Rab family. In terms of assembly, interacts with NTRK1/TRKA, RILP, PSMA7, RNF115 and FYCO1. Interacts with the PIK3C3/VPS34-PIK3R4 complex. The GTP-bound form interacts with OSBPL1A and RAC1. Interacts with CLN3. Interacts with CHM, the substrate-binding subunit of the Rab geranylgeranyltransferase complex. Interacts with C9orf72. Does not interact with HPS4 and the BLOC-3 complex (heterodimer of HPS1 and HPS4). Interacts with CLN5. Interacts with PLEKHM1 (via N- and C-terminus). Interacts with PRPH; the interaction is direct. Interacts with VPS13A. The GDP-bound form interacts with RIMOC1. Interacts with the MON1A-CCZ1B complex and this interaction is enhanced in the presence of RIMOC1. Interacts with VPS39 and VPS41. Forms a ternary complex with LAMP2 and RUFY4; the interaction with LAMP2 is mediated by RUFY4 (via RUN and coiled coil domains). Requires Mg(2+) as cofactor. Deubiquitination at Lys-191 and Lys-194 by USP32. In terms of processing, phosphorylated at Ser-72 by LRRK1; phosphorylation is dependent on protein kinase C (PKC) activation of LRRK1. Post-translationally, prenylated. Prenylation is required for association with cellular membranes. In terms of tissue distribution, widely expressed. High expression in liver, heart and kidney. Found in sensory and motor neurons.

Its subcellular location is the cytoplasmic vesicle. It is found in the phagosome membrane. The protein resides in the late endosome membrane. The protein localises to the lysosome membrane. It localises to the melanosome membrane. Its subcellular location is the autophagosome membrane. It is found in the lipid droplet. The protein resides in the endosome membrane. The protein localises to the mitochondrion membrane. It carries out the reaction GTP + H2O = GDP + phosphate + H(+). Regulated by guanine nucleotide exchange factors (GEFs) which promote the exchange of bound GDP for free GTP. Regulated by GTPase activating proteins (GAPs) which increase the GTP hydrolysis activity. Inhibited by GDP dissociation inhibitors (GDIs). In terms of biological role, the small GTPases Rab are key regulators of intracellular membrane trafficking, from the formation of transport vesicles to their fusion with membranes. Rabs cycle between an inactive GDP-bound form and an active GTP-bound form that is able to recruit to membranes different sets of downstream effectors directly responsible for vesicle formation, movement, tethering and fusion. In its active state, RAB7A binds to a variety of effector proteins playing a key role in the regulation of endo-lysosomal trafficking. Governs early-to-late endosomal maturation, microtubule minus-end as well as plus-end directed endosomal migration and positioning, and endosome-lysosome transport through different protein-protein interaction cascades. Also plays a central role in growth-factor-mediated cell signaling, nutrient-transporter-mediated nutrient uptake, neurotrophin transport in the axons of neurons and lipid metabolism. Also involved in regulation of some specialized endosomal membrane trafficking, such as maturation of melanosomes, pathogen-induced phagosomes (or vacuoles) and autophagosomes. Plays a role in the maturation and acidification of phagosomes that engulf pathogens, such as S.aureus and Mycobacteria. Plays a role in the fusion of phagosomes with lysosomes. In concert with RAC1, plays a role in regulating the formation of RBs (ruffled borders) in osteoclasts. Controls the endosomal trafficking and neurite outgrowth signaling of NTRK1/TRKA. Regulates the endocytic trafficking of the EGF-EGFR complex by regulating its lysosomal degradation. Involved in the ADRB2-stimulated lipolysis through lipophagy, a cytosolic lipase-independent autophagic pathway. Required for the exosomal release of SDCBP, CD63 and syndecan. Required for vesicular trafficking and cell surface expression of ACE2. May play a role in PRPH neuronal intermediate filament assembly. This is Ras-related protein Rab-7a from Mus musculus (Mouse).